We begin with the raw amino-acid sequence, 201 residues long: Large ribosomal subunit protein bL25 (201 aa).

It belongs to the bacterial ribosomal protein bL25 family. CTC subfamily. In terms of assembly, part of the 50S ribosomal subunit; part of the 5S rRNA/L5/L18/L25 subcomplex. Contacts the 5S rRNA. Binds to the 5S rRNA independently of L5 and L18.

In terms of biological role, this is one of the proteins that binds to the 5S RNA in the ribosome where it forms part of the central protuberance. In Ectopseudomonas mendocina (strain ymp) (Pseudomonas mendocina), this protein is Large ribosomal subunit protein bL25.